Here is a 381-residue protein sequence, read N- to C-terminus: rRNA adenine N-6-methyltransferase (381 aa).

Residues 1–19 are compositionally biased toward basic and acidic residues; the sequence is MSSSDEQPRPRRRNQDRQH. A disordered region spans residues 1 to 42; the sequence is MSSSDEQPRPRRRNQDRQHPNQNRPVLGRTERDRNRRQFGQN. The S-adenosyl-L-methionine site is built by Asn42, Leu44, Gly69, Glu90, Asp115, and Ala131. The interval 282–381 is disordered; that stretch reads RLDQKNEPRG…PGRRGGPGQR (100 aa). Positions 301–358 are enriched in basic and acidic residues; that stretch reads GGRDHGDRRTGGQDRGDRRTGGRDHRDRQASGHGDRRSSGRNRDDGRTGEREQGDQGG. Gly residues predominate over residues 359–381; that stretch reads RRGPSGGGRTGGRPGRRGGPGQR.

Belongs to the class I-like SAM-binding methyltransferase superfamily. rRNA adenine N(6)-methyltransferase family.

It carries out the reaction adenosine(2085) in 23S rRNA + 2 S-adenosyl-L-methionine = N(6)-dimethyladenosine(2085) in 23S rRNA + 2 S-adenosyl-L-homocysteine + 2 H(+). Functionally, this protein produces a dimethylation of the adenine residue at position 2085 in 23S rRNA, resulting in reduced affinity between ribosomes and macrolide-lincosamide-streptogramin B antibiotics. This is rRNA adenine N-6-methyltransferase (ermE) from Saccharopolyspora erythraea (strain ATCC 11635 / DSM 40517 / JCM 4748 / NBRC 13426 / NCIMB 8594 / NRRL 2338).